The primary structure comprises 554 residues: Afadin- and alpha-actinin-binding protein A (554 aa).

Coiled-coil stretches lie at residues 122 to 287 (LEYL…SQRK) and 359 to 449 (ENGL…AIRL). The tract at residues 508-528 (LASSGDYSRRPSKALPITSSS) is disordered.

It belongs to the ADIP family. As to quaternary structure, interacts with WRAP73.

Its subcellular location is the cell junction. The protein resides in the adherens junction. It localises to the cytoplasm. The protein localises to the cytoskeleton. It is found in the microtubule organizing center. Its subcellular location is the centrosome. The protein resides in the centriolar satellite. Its function is as follows. Belongs to an adhesion system, which plays a role in the organization of homotypic, interneuronal and heterotypic cell-cell adherens junctions (AJs). Involved in cell movement. Acts as a centrosome maturation factor, probably by maintaining the integrity of the pericentriolar material and proper microtubule nucleation at mitotic spindle poles. The function seems to implicate at least in part WRAP73; the SSX2IP:WRAP73 complex is proposed to act as regulator of spindle anchoring at the mitotic centrosome. This chain is Afadin- and alpha-actinin-binding protein A (ssx2ip-a), found in Xenopus laevis (African clawed frog).